We begin with the raw amino-acid sequence, 245 residues long: tRNA1(Val) (adenine(37)-N6)-methyltransferase (245 aa).

This sequence belongs to the methyltransferase superfamily. tRNA (adenine-N(6)-)-methyltransferase family.

The protein resides in the cytoplasm. The enzyme catalyses adenosine(37) in tRNA1(Val) + S-adenosyl-L-methionine = N(6)-methyladenosine(37) in tRNA1(Val) + S-adenosyl-L-homocysteine + H(+). Specifically methylates the adenine in position 37 of tRNA(1)(Val) (anticodon cmo5UAC). In Shigella dysenteriae serotype 1 (strain Sd197), this protein is tRNA1(Val) (adenine(37)-N6)-methyltransferase.